A 608-amino-acid polypeptide reads, in one-letter code: UvrABC system protein C (608 aa).

The GIY-YIG domain maps to 13–91 (HDAGVYRMYD…IKTYQPRYNV (79 aa)). Positions 201–236 (QQVLEHLIHKMEQASLALDFEEAARIRDQIQAVRAV) constitute a UVR domain.

Belongs to the UvrC family. In terms of assembly, interacts with UvrB in an incision complex.

It localises to the cytoplasm. In terms of biological role, the UvrABC repair system catalyzes the recognition and processing of DNA lesions. UvrC both incises the 5' and 3' sides of the lesion. The N-terminal half is responsible for the 3' incision and the C-terminal half is responsible for the 5' incision. The chain is UvrABC system protein C from Pasteurella multocida (strain Pm70).